Consider the following 252-residue polypeptide: Eukaryotic translation initiation factor 3 subunit K (252 aa).

Residues 46–225 (FDCYANLALL…VKVPTNKENE (180 aa)) form the PCI domain.

Belongs to the eIF-3 subunit K family. Component of the eukaryotic translation initiation factor 3 (eIF-3) complex.

The protein resides in the cytoplasm. Component of the eukaryotic translation initiation factor 3 (eIF-3) complex, which is involved in protein synthesis of a specialized repertoire of mRNAs and, together with other initiation factors, stimulates binding of mRNA and methionyl-tRNAi to the 40S ribosome. The eIF-3 complex specifically targets and initiates translation of a subset of mRNAs involved in cell proliferation. The chain is Eukaryotic translation initiation factor 3 subunit K from Aspergillus terreus (strain NIH 2624 / FGSC A1156).